A 1131-amino-acid polypeptide reads, in one-letter code: Inositol hexakisphosphate and diphosphoinositol-pentakisphosphate kinase 2 (1131 aa).

A disordered region spans residues 21-53 (DELLDQSKPENLDNLYEHTEDEEDEEDDEYDSP). Residues 25 to 38 (DQSKPENLDNLYEH) show a composition bias toward basic and acidic residues. Acidic residues predominate over residues 39–52 (TEDEEDEEDDEYDS). Position 67–68 (67–68 (KK)) interacts with substrate. ATP-binding positions include arginine 148, lysine 201, histidine 208, arginine 227, 251 to 254 (EEFM), and 260 to 262 (DVK). 227–228 (RK) contacts substrate. The substrate site is built by lysine 262 and arginine 276. ATP-binding positions include serine 278, aspartate 323, and 335–337 (DVN). 340 to 343 (SFVK) lines the substrate pocket. Residues 385-456 (PTTSGTKMEL…VLDIARQLLV (72 aa)) form a polyphosphoinositide-binding domain region. Residues 912-951 (KGCEEDKNLPSGFGYRPASQENESSKKHTHANDSDEDLGV) form a disordered region. Residues 934–951 (ESSKKHTHANDSDEDLGV) are compositionally biased toward basic and acidic residues.

Belongs to the histidine acid phosphatase family. VIP1 subfamily.

Its subcellular location is the cytoplasm. The protein resides in the cytosol. The enzyme catalyses 1D-myo-inositol hexakisphosphate + ATP = 1-diphospho-1D-myo-inositol 2,3,4,5,6-pentakisphosphate + ADP. It catalyses the reaction 5-diphospho-1D-myo-inositol 1,2,3,4,6-pentakisphosphate + ATP + H(+) = 1,5-bis(diphospho)-1D-myo-inositol 2,3,4,6-tetrakisphosphate + ADP. Bifunctional inositol kinase that acts in concert with the IP6K kinases IP6K1, IP6K2 and IP6K3 to synthesize the diphosphate group-containing inositol pyrophosphates diphosphoinositol pentakisphosphate, PP-InsP5, and bis-diphosphoinositol tetrakisphosphate, (PP)2-InsP4. PP-InsP5 and (PP)2-InsP4, also respectively called InsP7 and InsP8, regulate a variety of cellular processes, including apoptosis, vesicle trafficking, cytoskeletal dynamics, exocytosis, insulin signaling and neutrophil activation. Phosphorylates inositol hexakisphosphate (InsP6) at position 1 to produce PP-InsP5 which is in turn phosphorylated by IP6Ks to produce (PP)2-InsP4. Alternatively, phosphorylates PP-InsP5 at position 1, produced by IP6Ks from InsP6, to produce (PP)2-InsP4. The protein is Inositol hexakisphosphate and diphosphoinositol-pentakisphosphate kinase 2 of Xenopus laevis (African clawed frog).